Here is a 225-residue protein sequence, read N- to C-terminus: Respiratory nitrate reductase 1 gamma chain (225 aa).

Met-1 is subject to N-formylmethionine. The Periplasmic portion of the chain corresponds to Met-1–Phe-3. Residues Leu-4–Asp-29 traverse the membrane as a helical segment. The Cytoplasmic portion of the chain corresponds to Tyr-30 to Gly-47. Residues Met-48–Met-70 traverse the membrane as a helical segment. Heme b is bound by residues His-56 and His-66. The Periplasmic portion of the chain corresponds to Leu-71–Pro-82. The chain crosses the membrane as a helical span at residues Ile-83–Arg-112. Residues Leu-113–Gly-124 lie on the Cytoplasmic side of the membrane. Residues Ala-125 to Ala-148 traverse the membrane as a helical segment. Topologically, residues Gln-149–Phe-182 are periplasmic. The chain crosses the membrane as a helical span at residues Ile-183 to Phe-198. Positions 187 and 205 each coordinate heme b. At Pro-199 to His-225 the chain is on the cytoplasmic side.

As to quaternary structure, dimer of heterotrimers each composed of an alpha, a beta and a gamma chain. Alpha and beta are catalytic chains; gamma chains are involved in binding the enzyme complex to the cytoplasmic membrane. The cofactor is heme.

The protein resides in the cell inner membrane. The enzyme catalyses nitrate + a quinol = a quinone + nitrite + H2O. Functionally, the nitrate reductase enzyme complex allows E.coli to use nitrate as an electron acceptor during anaerobic growth. The gamma chain is a membrane-embedded heme-iron unit resembling cytochrome b, which transfers electrons from quinones to the beta subunit. This chain is Respiratory nitrate reductase 1 gamma chain (narI), found in Escherichia coli (strain K12).